Consider the following 124-residue polypeptide: Small ribosomal subunit protein uS11 (124 aa).

Belongs to the universal ribosomal protein uS11 family. Part of the 30S ribosomal subunit. Interacts with proteins S7 and S18. Binds to IF-3.

Its function is as follows. Located on the platform of the 30S subunit, it bridges several disparate RNA helices of the 16S rRNA. Forms part of the Shine-Dalgarno cleft in the 70S ribosome. This chain is Small ribosomal subunit protein uS11, found in Anaplasma phagocytophilum (strain HZ).